Consider the following 930-residue polypeptide: Translation initiation factor IF-2 (930 aa).

Disordered regions lie at residues 160 to 179 and 208 to 301; these read EPVE…FTDG and AKRA…AAAP. A compositionally biased stretch (basic and acidic residues) spans 208 to 227; that stretch reads AKRAAEEAKRTQPRAEKPAD. Composition is skewed to basic residues over residues 263 to 272 and 288 to 301; these read GHGHKKHHHG and KRGA…AAAP. The region spanning 431 to 600 is the tr-type G domain; sequence TRAPVVTVMG…SLQAEVLELT (170 aa). The tract at residues 440–447 is G1; the sequence is GHVDHGKT. 440-447 provides a ligand contact to GTP; sequence GHVDHGKT. Residues 465-469 are G2; that stretch reads GITQH. The tract at residues 486–489 is G3; it reads DTPG. GTP-binding positions include 486-490 and 540-543; these read DTPGH and NKCD. A G4 region spans residues 540 to 543; the sequence is NKCD. Positions 576–578 are G5; the sequence is SAH.

The protein belongs to the TRAFAC class translation factor GTPase superfamily. Classic translation factor GTPase family. IF-2 subfamily.

It is found in the cytoplasm. Its function is as follows. One of the essential components for the initiation of protein synthesis. Protects formylmethionyl-tRNA from spontaneous hydrolysis and promotes its binding to the 30S ribosomal subunits. Also involved in the hydrolysis of GTP during the formation of the 70S ribosomal complex. The polypeptide is Translation initiation factor IF-2 (Cellvibrio japonicus (strain Ueda107) (Pseudomonas fluorescens subsp. cellulosa)).